Reading from the N-terminus, the 257-residue chain is Snake venom serine protease Haly-2 (257 aa).

A signal peptide spans 1-18; it reads MVLIRVLANLLILQLSYA. The propeptide occupies 19 to 24; sequence QKSSEL. In terms of domain architecture, Peptidase S1 spans 25-248; that stretch reads IIGGDECNIN…HLEWIRSIIA (224 aa). 6 disulfide bridges follow: Cys-31–Cys-162, Cys-49–Cys-65, Cys-97–Cys-255, Cys-141–Cys-209, Cys-173–Cys-188, and Cys-199–Cys-224. The active-site Charge relay system is His-64. Residue Asn-100 is glycosylated (N-linked (GlcNAc...) asparagine). Asp-109 functions as the Charge relay system in the catalytic mechanism. Catalysis depends on Ser-203, which acts as the Charge relay system.

Belongs to the peptidase S1 family. Snake venom subfamily. In terms of assembly, monomer. As to expression, expressed by the venom gland.

It is found in the secreted. Functionally, snake venom serine protease that may act in the hemostasis system of the prey. The chain is Snake venom serine protease Haly-2 from Gloydius brevicauda (Korean slamosa snake).